The sequence spans 78 residues: MALIRKTFYFLFAVFFILVQLPSGCQAGLDFSQPFPSGEFAVFESCKFSRGKCRKECLENEKPDGNCRLNFLCCRQSI.

An N-terminal signal peptide occupies residues Met1–Ala27. 3 disulfides stabilise this stretch: Cys46-Cys74, Cys53-Cys67, and Cys57-Cys73.

It belongs to the beta-defensin family.

It localises to the secreted. In terms of biological role, has antimicrobial activity. The protein is Beta-defensin 105A (DEFB105A) of Hylobates lar (Lar gibbon).